The following is a 1320-amino-acid chain: Clustered mitochondria protein homolog (1320 aa).

Disordered stretches follow at residues 166–241 (QQLE…KQKM), 552–582 (YGSM…TKSI), and 683–708 (LKEK…EDVQ). Residues 185–194 (TEDKEEKETI) are compositionally biased toward basic and acidic residues. Residues 202–213 (KKNKHHNKKGNK) show a composition bias toward basic residues. Basic and acidic residues-rich tracts occupy residues 226–241 (NEEK…KQKM), 565–575 (QQQKEENEENK), and 683–695 (LKEK…KEGI). In terms of domain architecture, Clu spans 379 to 649 (KTNRYDINKG…KATPRDPNYT (271 aa)). TPR repeat units lie at residues 955–988 (GLDL…YHQV), 997–1030 (GACF…TEKT), 1039–1072 (VQAY…TDLL), 1081–1114 (ASIY…QEFL), and 1123–1156 (STTY…LEKE). Residues 1204–1320 (KADQFKKSQP…SKPNKKSSKN (117 aa)) form a disordered region. Residues 1237-1247 (KPKKSQSKKSK) are compositionally biased toward basic residues. The segment covering 1248 to 1311 (STNTTTTTNT…PTSSSAADSS (64 aa)) has biased composition (low complexity).

The protein belongs to the CLU family.

The protein localises to the cytoplasm. Its function is as follows. mRNA-binding protein involved in proper cytoplasmic distribution of mitochondria. This Dictyostelium discoideum (Social amoeba) protein is Clustered mitochondria protein homolog.